The primary structure comprises 247 residues: Probable dihydroorotate dehydrogenase B (NAD(+)), electron transfer subunit (247 aa).

The FAD-binding FR-type domain occupies 1-87 (MLRRVSIEET…RGPYGHGFSG (87 aa)). Residues C201, C206, C209, and C217 each contribute to the [2Fe-2S] cluster site.

Belongs to the PyrK family. As to quaternary structure, heterotetramer of 2 PyrK and 2 PyrD type B subunits. The cofactor is [2Fe-2S] cluster. It depends on FAD as a cofactor.

Its pathway is pyrimidine metabolism; UMP biosynthesis via de novo pathway; orotate from (S)-dihydroorotate (NAD(+) route): step 1/1. Responsible for channeling the electrons from the oxidation of dihydroorotate from the FMN redox center in the PyrD type B subunit to the ultimate electron acceptor NAD(+). This is Probable dihydroorotate dehydrogenase B (NAD(+)), electron transfer subunit from Pyrococcus furiosus (strain ATCC 43587 / DSM 3638 / JCM 8422 / Vc1).